A 361-amino-acid polypeptide reads, in one-letter code: Spermatogenesis-associated protein 17 (361 aa).

3 consecutive IQ domains span residues 32 to 61 (ENDA…IVTI), 55 to 84 (LNRI…VAYY), and 91 to 120 (YNAM…LKEY).

It is found in the cytoplasm. This chain is Spermatogenesis-associated protein 17 (SPATA17), found in Homo sapiens (Human).